Here is a 378-residue protein sequence, read N- to C-terminus: Acetylornithine deacetylase (378 aa).

His76 contributes to the Zn(2+) binding site. The active site involves Asp78. Asp108 serves as a coordination point for Zn(2+). Residue Glu140 is part of the active site. 3 residues coordinate Zn(2+): Glu141, Glu165, and His351.

This sequence belongs to the peptidase M20A family. ArgE subfamily. Homodimer. Zn(2+) serves as cofactor. The cofactor is Co(2+). It depends on glutathione as a cofactor.

It localises to the cytoplasm. It carries out the reaction N(2)-acetyl-L-ornithine + H2O = L-ornithine + acetate. It participates in amino-acid biosynthesis; L-arginine biosynthesis; L-ornithine from N(2)-acetyl-L-ornithine (linear): step 1/1. Its function is as follows. Catalyzes the hydrolysis of the amide bond of N(2)-acetylated L-amino acids. Cleaves the acetyl group from N-acetyl-L-ornithine to form L-ornithine, an intermediate in L-arginine biosynthesis pathway, and a branchpoint in the synthesis of polyamines. This chain is Acetylornithine deacetylase, found in Vibrio parahaemolyticus serotype O3:K6 (strain RIMD 2210633).